A 257-amino-acid chain; its full sequence is Cytosolic Fe-S cluster assembly factor NUBP2 homolog (257 aa).

14 to 21 (GKGGVGKS) contacts ATP. [4Fe-4S] cluster contacts are provided by cysteine 188 and cysteine 191.

Belongs to the Mrp/NBP35 ATP-binding proteins family. NUBP2/CFD1 subfamily. In terms of assembly, heterotetramer of 2 NUBP1 and 2 NUBP2 chains. [4Fe-4S] cluster serves as cofactor.

It is found in the cytoplasm. In terms of biological role, component of the cytosolic iron-sulfur (Fe/S) protein assembly (CIA) machinery. Required for maturation of extramitochondrial Fe-S proteins. The NUBP1-NUBP2 heterotetramer forms a Fe-S scaffold complex, mediating the de novo assembly of an Fe-S cluster and its transfer to target apoproteins. This is Cytosolic Fe-S cluster assembly factor NUBP2 homolog from Culex quinquefasciatus (Southern house mosquito).